Consider the following 232-residue polypeptide: Triosephosphate isomerase (232 aa).

Substrate is bound at residue 6 to 8; sequence NFK. Residue His86 is the Electrophile of the active site. Residue Glu155 is the Proton acceptor of the active site. Substrate-binding residues include Gly161 and Ser191.

This sequence belongs to the triosephosphate isomerase family. As to quaternary structure, homodimer.

The protein resides in the cytoplasm. It catalyses the reaction D-glyceraldehyde 3-phosphate = dihydroxyacetone phosphate. It participates in carbohydrate biosynthesis; gluconeogenesis. Its pathway is carbohydrate degradation; glycolysis; D-glyceraldehyde 3-phosphate from glycerone phosphate: step 1/1. Its function is as follows. Involved in the gluconeogenesis. Catalyzes stereospecifically the conversion of dihydroxyacetone phosphate (DHAP) to D-glyceraldehyde-3-phosphate (G3P). The polypeptide is Triosephosphate isomerase (Nitratiruptor sp. (strain SB155-2)).